Reading from the N-terminus, the 437-residue chain is MESVDFMAVDEQFHDDLDLWSLSLVDDYKKHGLGVDCYVLEPVVDRKIFDRFLLEPICDPVDVLYDYFRIHRDNIDQYIVDRLFAYITYKDIISALVSKNYMEDIFSIIIKNCNSVQDLLLYYLSNAYVEIDIVDLMVDHGAVIYKIECLNAYFRGICKKESSVVEFILNCGIPDENDVKLDLYKIIQYTRGFLVDEPTVLEIYKLCIPYIEDINQLDAGGRTLLYRAIYAGYIDLVSWLLENGANVNAVMSNGYTCLDVAVDRGSVIARREAHLKILEILLREPLSIDCIKLAILNNTIENHDVIKLCIKYFMMVDYSLCNVYASSLFDYIIDCKQELEYIRQMKIHNTTMYELIYNRDKNKHASHILHRYSKHPVLTQCITKGFKIYTEVTEQVTKALNRRALIDEIINNVSTDDNLLSKLPLEIRDLIVSQAVI.

ANK repeat units lie at residues 117–146, 220–249, and 253–290; these read QDLLLYYLSNAYVEIDIVDLMVDHGAVIYK, GGRTLLYRAIYAGYIDLVSWLLENGANVNA, and NGYTCLDVAVDRGSVIARREAHLKILEILLREPLSIDC.

This sequence belongs to the orthopoxvirus OPG015 family.

May be involved in virus-host protein interaction through the ankyrin repeats. In Monkeypox virus, this protein is Ankyrin repeat domain-containing protein OPG015 (OPG015).